A 179-amino-acid polypeptide reads, in one-letter code: Adenine phosphoribosyltransferase (179 aa).

It belongs to the purine/pyrimidine phosphoribosyltransferase family. Homodimer.

It is found in the cytoplasm. The enzyme catalyses AMP + diphosphate = 5-phospho-alpha-D-ribose 1-diphosphate + adenine. It functions in the pathway purine metabolism; AMP biosynthesis via salvage pathway; AMP from adenine: step 1/1. Catalyzes a salvage reaction resulting in the formation of AMP, that is energically less costly than de novo synthesis. The chain is Adenine phosphoribosyltransferase from Helicobacter pylori (strain J99 / ATCC 700824) (Campylobacter pylori J99).